Consider the following 583-residue polypeptide: Kelch-like protein 35 (583 aa).

The 79-residue stretch at T41–A119 folds into the BTB domain. The 103-residue stretch at L146–A248 folds into the BACK domain. 6 Kelch repeats span residues V301 to N350, V352 to G394, Q395 to G441, L443 to D489, T490 to G531, and V533 to Q579.

The protein is Kelch-like protein 35 (KLHL35) of Homo sapiens (Human).